Reading from the N-terminus, the 238-residue chain is MIQQYRDSNQVIWFDEELIEDPSQPIFDAEYWQSTNKVTGSASGRGTTWFVQLDTMQAALRHYRRGGLFGKLVKDNYLFSGWEQTRCAQEFQLLLTLINAGVHVPRPIAARAVKSGLTYQADLLSERIPNARDLVSILQEKPLPEGMYQKIGQEIAKMHNAGVNHTDLNIHNILIDDKDKVWIIDFDKCRKQEHGDWKKQNLERLLRSFKKELLKRQIHWKERDFAVLTEALSCLDIK.

Residue aspartate 167 is part of the active site.

The protein belongs to the protein kinase superfamily. KdkA/RfaP family.

The protein resides in the cell inner membrane. It carries out the reaction an alpha-Kdo-(2-&gt;6)-lipid IVA + ATP = a 4-O-phospho-alpha-Kdo-(2-&gt;6)-lipid IVA + ADP + H(+). It functions in the pathway bacterial outer membrane biogenesis; LPS core biosynthesis. Catalyzes the ATP-dependent phosphorylation of the 3-deoxy-D-manno-octulosonic acid (Kdo) residue in Kdo-lipid IV(A) at the 4-OH position. The sequence is that of 3-deoxy-D-manno-octulosonic acid kinase from Vibrio parahaemolyticus serotype O3:K6 (strain RIMD 2210633).